The following is a 153-amino-acid chain: Putative ATP synthase subunit f, mitochondrial (153 aa).

It belongs to the ATPase F chain family. In terms of assembly, subunit of the F-type ATPase which has 2 components, CF(1) - the catalytic core - and CF(0) - the membrane proton channel.

The protein resides in the mitochondrion membrane. Mitochondrial membrane ATP synthase (F(1)F(0) ATP synthase or Complex V) produces ATP from ADP in the presence of a proton gradient across the membrane which is generated by electron transport complexes of the respiratory chain. F-type ATPases consist of two structural domains, F(1) - containing the extramembraneous catalytic core and F(0) - containing the membrane proton channel, linked together by a central stalk and a peripheral stalk. During catalysis, ATP synthesis in the catalytic domain of F(1) is coupled via a rotary mechanism of the central stalk subunits to proton translocation. Part of the complex F(0) domain. Minor subunit located with subunit a in the membrane. The chain is Putative ATP synthase subunit f, mitochondrial from Caenorhabditis elegans.